Here is a 397-residue protein sequence, read N- to C-terminus: Phosphoglycerate kinase (397 aa).

Substrate contacts are provided by residues D25 to N27, R41, H64 to R67, R118, and R151. Residues K202, E324, and G350–T353 contribute to the ATP site.

The protein belongs to the phosphoglycerate kinase family. As to quaternary structure, monomer.

The protein localises to the cytoplasm. The catalysed reaction is (2R)-3-phosphoglycerate + ATP = (2R)-3-phospho-glyceroyl phosphate + ADP. It participates in carbohydrate degradation; glycolysis; pyruvate from D-glyceraldehyde 3-phosphate: step 2/5. The chain is Phosphoglycerate kinase from Acidovorax ebreus (strain TPSY) (Diaphorobacter sp. (strain TPSY)).